Reading from the N-terminus, the 107-residue chain is Multidrug resistance protein mmr (107 aa).

4 consecutive transmembrane segments (helical) span residues 2–19, 29–51, 58–80, and 84–106; these read TYLF…ATSL, LWPT…VSIS, VAYA…LFLG, and SVTK…LTGA.

It belongs to the drug/metabolite transporter (DMT) superfamily. Small multidrug resistance (SMR) (TC 2.A.7.1) family. Mmr subfamily.

The protein resides in the cell membrane. In terms of biological role, multidrug efflux pump. Confers resistance to tetraphenylphosphonium (TPP), erythromycin, ethidium bromide, acriflavine, safranin O and pyronin Y. This is Multidrug resistance protein mmr (mmr) from Mycolicibacterium paratuberculosis (strain ATCC BAA-968 / K-10) (Mycobacterium paratuberculosis).